A 180-amino-acid chain; its full sequence is UDP-4-amino-4,6-dideoxy-N-acetyl-beta-L-altrosamine N-acetyltransferase (180 aa).

One can recognise an N-acetyltransferase domain in the interval 13 to 169 (IDFTNLNDGE…IDVLLYYKDK (157 aa)).

The enzyme catalyses UDP-4-amino-4,6-dideoxy-N-acetyl-beta-L-altrosamine + acetyl-CoA = UDP-2,4-diacetamido-2,4,6-trideoxy-beta-L-altrose + CoA + H(+). In terms of biological role, catalyzes the third step in the biosynthesis of pseudaminic acid, a sialic-acid-like sugar that is used to modify flagellin. Mediates N-4 acetylation of UDP-4-amino-4,6-dideoxy-beta-L-AltNAc to form UDP-2,4-diacetamido-2,4,6-trideoxy-beta-L-altropyranose. This chain is UDP-4-amino-4,6-dideoxy-N-acetyl-beta-L-altrosamine N-acetyltransferase (pseH), found in Helicobacter pylori (strain ATCC 700392 / 26695) (Campylobacter pylori).